We begin with the raw amino-acid sequence, 500 residues long: Glycerol kinase (500 aa).

An ADP-binding site is contributed by threonine 17. ATP is bound by residues threonine 17, threonine 18, and serine 19. Threonine 17 lines the sn-glycerol 3-phosphate pocket. Position 21 (arginine 21) interacts with ADP. Arginine 87, glutamate 88, tyrosine 139, and aspartate 243 together coordinate sn-glycerol 3-phosphate. 5 residues coordinate glycerol: arginine 87, glutamate 88, tyrosine 139, aspartate 243, and glutamine 244. Residues threonine 265 and glycine 308 each contribute to the ADP site. Residues threonine 265, glycine 308, glutamine 312, and glycine 409 each contribute to the ATP site. Positions 409 and 413 each coordinate ADP.

This sequence belongs to the FGGY kinase family.

The catalysed reaction is glycerol + ATP = sn-glycerol 3-phosphate + ADP + H(+). It participates in polyol metabolism; glycerol degradation via glycerol kinase pathway; sn-glycerol 3-phosphate from glycerol: step 1/1. Its activity is regulated as follows. Inhibited by fructose 1,6-bisphosphate (FBP). In terms of biological role, key enzyme in the regulation of glycerol uptake and metabolism. Catalyzes the phosphorylation of glycerol to yield sn-glycerol 3-phosphate. The protein is Glycerol kinase of Pseudomonas fluorescens (strain Pf0-1).